The chain runs to 809 residues: MESAGTGRSLRTPPPRLLLLLLLQVAGPAGALAETLLNAPKAMGTSSSPLSPASVVAPGTTAFEESRLPVFTLDYPHVQIPFEITLWILLASLAKIGFHLYHKLPTIVPESCLLIMVGLLLGGIIFGVDEKSPPAMKTDVFFLYLLPPIVLDAGYFMPTRPFFENLGTIFWYAVVGTLWNSIGIGVSLFGICQIEAFGLSDITLLQNLLFGSLISAVDPVAVLAVFENIHVNEQLYILVFGESLLNDAVTVVLYNLFKSFCQMKTIETIDVFAGIANFFVVGIGGVLIGIFLGFIAAFTTRFTHNIRVIEPLFVFLYSYLSYITAEMFHLSGIMAITACAMTMNKYVEENVSQKSYTTIKYFMKMLSSVSETLIFIFMGVSTVGKNHEWNWAFVCFTLAFCLIWRALGVFVLTRVINWFRTIPLTFKDQFIIAYGGLRGAICFALVFLLPAAVFPRKKLFITAAIVVIFFTVFILGITIRPLVEFLDVKRSNKKQQAVSEEIHCRFFDHVKTGIEDVCGHWGHNFWRDKFKKFDDKYLRKLLIRENQPKSSIVSLYKKLEIKHAIEMAETGMISTVPSFASLNDCREEKIRKLTPGEMDEIREILSRNLYQIRQRTLSYNRHNLTADTSERQAKEILIRRRHSLRESIRKDNSLNRERRASTSTSRYLSLPKNTKLPEKLQKRKNISNADGDSSDSEADAGTTVLNLQPRARRFLPEPFSKKASQAYKMEWKNEVDAGSGQGQPSPPAAPRSKEGGTQTPAVLRQPLLSKDQGREDSLTEGGRPKPPPRLVRRASEPGNRKSRLGSDKP.

7 consecutive transmembrane segments (helical) span residues 107 to 127, 138 to 158, 169 to 189, 209 to 229, 237 to 257, 278 to 298, and 308 to 328; these read IVPE…IIFG, TDVF…YFMP, IFWY…VSLF, LFGS…FENI, ILVF…YNLF, FFVV…IAAF, and VIEP…AEMF. Asn350 carries an N-linked (GlcNAc...) asparagine glycan. 4 consecutive transmembrane segments (helical) span residues 361–381, 392–412, 430–450, and 459–479; these read YFMK…MGVS, AFVC…VFVL, FIIA…FLLP, and LFIT…GITI. Basic and acidic residues-rich tracts occupy residues 648-660 and 793-809; these read IRKD…ERRA and RASE…SDKP. Disordered stretches follow at residues 648–700 and 734–809; these read IRKD…EADA and EVDA…SDKP.

The protein belongs to the monovalent cation:proton antiporter 1 (CPA1) transporter (TC 2.A.36) family. In terms of assembly, interacts with CHP1 and CHP2. High levels in intestine and kidney. Strongly expressed in gastric epithelial cells, with particularly high expression levels in mucous cells.

The protein resides in the apical cell membrane. It catalyses the reaction Na(+)(in) + H(+)(out) = Na(+)(out) + H(+)(in). Plasma membrane Na(+)/H(+) antiporter. Mediates the electroneutral exchange of intracellular H(+) ions for extracellular Na(+). Major apical Na(+)/H(+) exchanger in the base of the colonic crypt. Controls in the colonic crypt intracellular pH (pHi) to direct colonic epithelial cell differentiation into the absorptive enterocyte lineage at the expense of the secretory lineage. This Oryctolagus cuniculus (Rabbit) protein is Sodium/hydrogen exchanger 2 (SLC9A2).